We begin with the raw amino-acid sequence, 504 residues long: Cholesterol 7-alpha-monooxygenase (504 aa).

Cys-444 provides a ligand contact to heme.

It belongs to the cytochrome P450 family. Heme serves as cofactor.

It localises to the endoplasmic reticulum membrane. Its subcellular location is the microsome membrane. It catalyses the reaction cholesterol + reduced [NADPH--hemoprotein reductase] + O2 = 7alpha-hydroxycholesterol + oxidized [NADPH--hemoprotein reductase] + H2O + H(+). The protein operates within lipid metabolism; bile acid biosynthesis. Catalyzes a rate-limiting step in cholesterol catabolism and bile acid biosynthesis by introducing a hydrophilic moiety at position 7 of cholesterol. Important for cholesterol homeostasis. The protein is Cholesterol 7-alpha-monooxygenase (CYP7A1) of Cricetulus griseus (Chinese hamster).